The chain runs to 135 residues: Histone H3 type 3 (135 aa).

The interval 1–40 is disordered; the sequence is MARTKQTARKSTGGKAPRKQLATKAARKTPATGGVKKPHR. Residue K5 is modified to N6-methyllysine. Position 10 is an N6-acetyllysine; alternate (K10). K10 is modified (N6-methyllysine; alternate). S11 is modified (phosphoserine). Residue T12 is modified to Phosphothreonine. Residues K15, K19, and K24 each carry the N6-acetyllysine modification. An N6-acetyllysine; alternate modification is found at K28. K28 carries the N6-methyllysine; alternate modification. 2 positions are modified to N6-methyllysine: K36 and K37.

It belongs to the histone H3 family. In terms of assembly, the nucleosome is a histone octamer containing two molecules each of H2A, H2B, H3 and H4 assembled in one H3-H4 heterotetramer and two H2A-H2B heterodimers. The octamer wraps approximately 147 bp of DNA. Post-translationally, acetylation is generally linked to gene activation. Acetylated to form H3K9ac (11%), H3K14ac (17%), H3K18ac (11%), H3K23ac (16%) and H3K27ac (7%). H3K4, H3K35 and H3K36 are not acetylated. H3K4me prevents acetylation. 32% of the histone H3 are acetylated with, on average, 2.4 acetyl-Lys. They are all continuously deacatylated and re-acetylated with a half-life of approximately 2 minutes. In terms of processing, monomethylated to form H3K4me1 (81%), H3K9me1 (16%), H3K27me1 (25%), H3K35me1 (25%) and H3K36me1 (5%). No methylation at H3K14, H3K18 and H3K23. Methylated by a protein complex that includes Mut11. Set1 methylates specifically H3K4. H3K4me1 is associated with silenced euchromatin. Set3 forms H3K9me1, while H3K9me2 is undetected. H3K9me1 is specifically associated with silent, multi-copy transgenes. No phosphorylation detected.

It is found in the nucleus. The protein localises to the chromosome. Its function is as follows. Core component of nucleosome. Nucleosomes wrap and compact DNA into chromatin, limiting DNA accessibility to the cellular machineries which require DNA as a template. Histones thereby play a central role in transcription regulation, DNA repair, DNA replication and chromosomal stability. DNA accessibility is regulated via a complex set of post-translational modifications of histones, also called histone code, and nucleosome remodeling. This is Histone H3 type 3 (ch3-IV) from Chlamydomonas reinhardtii (Chlamydomonas smithii).